The primary structure comprises 200 residues: Endoribonuclease YbeY (200 aa).

Zn(2+) is bound by residues His-120, His-124, and His-130.

This sequence belongs to the endoribonuclease YbeY family. The cofactor is Zn(2+).

It is found in the cytoplasm. Single strand-specific metallo-endoribonuclease involved in late-stage 70S ribosome quality control and in maturation of the 3' terminus of the 16S rRNA. The polypeptide is Endoribonuclease YbeY (Corynebacterium efficiens (strain DSM 44549 / YS-314 / AJ 12310 / JCM 11189 / NBRC 100395)).